A 131-amino-acid polypeptide reads, in one-letter code: Small ribosomal subunit protein uS12 (131 aa).

Aspartate 89 is modified (3-methylthioaspartic acid).

Belongs to the universal ribosomal protein uS12 family. As to quaternary structure, part of the 30S ribosomal subunit. Contacts proteins S8 and S17. May interact with IF1 in the 30S initiation complex.

In terms of biological role, with S4 and S5 plays an important role in translational accuracy. Functionally, interacts with and stabilizes bases of the 16S rRNA that are involved in tRNA selection in the A site and with the mRNA backbone. Located at the interface of the 30S and 50S subunits, it traverses the body of the 30S subunit contacting proteins on the other side and probably holding the rRNA structure together. The combined cluster of proteins S8, S12 and S17 appears to hold together the shoulder and platform of the 30S subunit. This Karelsulcia muelleri (strain GWSS) (Sulcia muelleri) protein is Small ribosomal subunit protein uS12.